Consider the following 363-residue polypeptide: MTDKTYKIAVLPGDGIGPEVMAQAHKVLDAIEKKHAIHFEREEHDVGGIAIDNHGCPLPQSTVTACEESDAVLFGSVGGPKWEHLPPNDQPERGALLPLRKHFQLFCNLRPAQIHSGLEAFSPLRADISGRGFDIVVVRELTGGIYFGQPKGREGEGANEKAYDTEIYHRFEIERIAKIAFESARLRRKKVCSIDKANVLQSSILWREVVEEIAKDYPDVELSHMYIDNATMQLIKDPAQFDVMLCSNIFGDIISDECAMITGSMGMLPSASLNESKFGLYEPAGGSAPDIAGKNIANPVAQILSAALMLRYSLGEEAAAQDIENAVSQALAAGELTADLAGDKPALSTAEMGDKIAQYILNS.

79–92 (GPKWEHLPPNDQPE) serves as a coordination point for NAD(+). Residues Arg-100, Arg-110, Arg-139, and Asp-228 each contribute to the substrate site. Mg(2+) contacts are provided by Asp-228, Asp-252, and Asp-256. Residue 286-298 (GSAPDIAGKNIAN) coordinates NAD(+).

The protein belongs to the isocitrate and isopropylmalate dehydrogenases family. LeuB type 1 subfamily. As to quaternary structure, homodimer. Requires Mg(2+) as cofactor. It depends on Mn(2+) as a cofactor.

It localises to the cytoplasm. It catalyses the reaction (2R,3S)-3-isopropylmalate + NAD(+) = 4-methyl-2-oxopentanoate + CO2 + NADH. It functions in the pathway amino-acid biosynthesis; L-leucine biosynthesis; L-leucine from 3-methyl-2-oxobutanoate: step 3/4. In terms of biological role, catalyzes the oxidation of 3-carboxy-2-hydroxy-4-methylpentanoate (3-isopropylmalate) to 3-carboxy-4-methyl-2-oxopentanoate. The product decarboxylates to 4-methyl-2 oxopentanoate. This chain is 3-isopropylmalate dehydrogenase, found in Vibrio vulnificus (strain YJ016).